The sequence spans 207 residues: Putative 3-methyladenine DNA glycosylase (207 aa).

It belongs to the DNA glycosylase MPG family.

The sequence is that of Putative 3-methyladenine DNA glycosylase from Listeria monocytogenes serovar 1/2a (strain ATCC BAA-679 / EGD-e).